Here is a 154-residue protein sequence, read N- to C-terminus: Catabolic 3-dehydroquinase (154 aa).

Residue Tyr-25 is the Proton acceptor of the active site. Substrate-binding residues include Asn-79, His-85, and Asp-92. His-105 (proton donor) is an active-site residue. Residues 106–107 (IS) and Arg-116 each bind substrate.

The protein belongs to the type-II 3-dehydroquinase family. As to quaternary structure, homododecamer. Adopts a ring-like structure, composed of an arrangement of two hexameric rings stacked on top of one another.

It carries out the reaction 3-dehydroquinate = 3-dehydroshikimate + H2O. It functions in the pathway aromatic compound metabolism; 3,4-dihydroxybenzoate biosynthesis; 3,4-dihydroxybenzoate from 3-dehydroquinate: step 1/2. Functionally, is involved in the catabolism of quinate. Allows the utilization of quinate as carbon source via the beta-ketoadipate pathway. The sequence is that of Catabolic 3-dehydroquinase from Botryotinia fuckeliana (strain B05.10) (Noble rot fungus).